A 559-amino-acid polypeptide reads, in one-letter code: MTTPSKFRDIEIRAPRGNTLTAKSWLTEAPLRMLMNNLDPEVAENPKELVVYGGIGRAARNWECYDRIVETLRQLNDDETLLVQSGKPVGVFKTHADAPRVLIANSNLVPHWATWEHFNELDARGLAMYGQMTAGSWIYIGSQGIVQGTYETFVEAGRQHYDGNLAGRWVLTAGLGGMGGAQPLAATLAGACSLNIECQQSRIDFRLRSRYVDEQAKDLDDALARIARYTAEGKAISIALLGNAAEILPELVRRGVRPDMVTDQTSAHDPLNGYLPAGWTWEQYRDRAQTDPAGVVKAAKRSMAVHVQAMLAFQKLGIPTFDYGNNIRQMAKEEGVANAFDFPGFVPAYIRPLFCRGIGPFRWAALSGDPQDIYKTDAKVKELIPDDAHLHRWLDMARERISFQGLPARICWVGLGLRAKLGLAFNEMVRSGELSAPIVIGRDHLDSGSVSSPNRETEAMQDGSDAVSDWPLLNALLNTASGATWVSLHHGGGVGMGFSQHSGMVIVCDGTDAAAARIARVLTNDPGTGVMRHADAGYPIAIDCAREQGLNLPMITGKR.

NAD(+) contacts are provided by residues Gly-53–Gly-54, Gln-131, Gly-177–Gly-179, Glu-197, Arg-202, Asn-243–Ala-244, Gln-264–His-268, Tyr-274–Leu-275, and Tyr-323. Cys-411 is a catalytic residue. NAD(+) is bound at residue Gly-493.

This sequence belongs to the urocanase family. The cofactor is NAD(+).

It localises to the cytoplasm. It catalyses the reaction 4-imidazolone-5-propanoate = trans-urocanate + H2O. The protein operates within amino-acid degradation; L-histidine degradation into L-glutamate; N-formimidoyl-L-glutamate from L-histidine: step 2/3. Its function is as follows. Catalyzes the conversion of urocanate to 4-imidazolone-5-propionate. This is Urocanate hydratase from Pseudomonas paraeruginosa (strain DSM 24068 / PA7) (Pseudomonas aeruginosa (strain PA7)).